A 242-amino-acid chain; its full sequence is Biosynthetic peptidoglycan transglycosylase (242 aa).

A helical membrane pass occupies residues 19–39 (ILAALAVFWGGGIALFSVVPV).

Belongs to the glycosyltransferase 51 family.

The protein resides in the cell inner membrane. It carries out the reaction [GlcNAc-(1-&gt;4)-Mur2Ac(oyl-L-Ala-gamma-D-Glu-L-Lys-D-Ala-D-Ala)](n)-di-trans,octa-cis-undecaprenyl diphosphate + beta-D-GlcNAc-(1-&gt;4)-Mur2Ac(oyl-L-Ala-gamma-D-Glu-L-Lys-D-Ala-D-Ala)-di-trans,octa-cis-undecaprenyl diphosphate = [GlcNAc-(1-&gt;4)-Mur2Ac(oyl-L-Ala-gamma-D-Glu-L-Lys-D-Ala-D-Ala)](n+1)-di-trans,octa-cis-undecaprenyl diphosphate + di-trans,octa-cis-undecaprenyl diphosphate + H(+). It participates in cell wall biogenesis; peptidoglycan biosynthesis. Peptidoglycan polymerase that catalyzes glycan chain elongation from lipid-linked precursors. This Salmonella choleraesuis (strain SC-B67) protein is Biosynthetic peptidoglycan transglycosylase.